The primary structure comprises 102 residues: Turripeptide OL55-like (102 aa).

Post-translationally, contains 8 disulfide bonds. In terms of tissue distribution, expressed by the venom duct.

It is found in the secreted. In terms of biological role, acts as a neurotoxin by inhibiting an ion channel. In Lophiotoma acuta (Marbled turris), this protein is Turripeptide OL55-like.